The chain runs to 856 residues: MSDNDKPKLGMRAPLGLKRTVETGQVKQSFSHGRSNTVVVEVKRRRIVPGRPGEAEPQVTEETAAAPVAPAPAPAPAAQAPVAPRPAPAPIPTGRPMTPLERREQQERLLREAEEARMAALEETRRREERAKAEATEEERRRAEENRRAEEEAERAAAAAAAAATAEAETAAAAPREEAPAAAGTAEEAPRTSSSTMPPPRRFTPVPSPKRPEPPRPQQRDRKGDDRRQSGKLTVTRALDDDSGARARSLAALKRAREKDKRAHQAGTVQQKQVRDVAVPETITVGELANRMAERGADLVKALFKMGMPVTVNQSIDQDTAELLVTEFGHNIKRVSDSDVDLITSDDVDAAETLQPRPPVVTIMGHVDHGKTSLLDALRGTDVASGEAGGITQHIGAYQVQVKSGAKITFLDTPGHEAFSEMRARGANITDIVVIVVAGDDGLRPQTIEAISHTRAAGVPMIIAINKMDKPGSNAQRVREALLQHDVQVESMGGDVQEVEVSALKKTGLDELIEKIELQAELLELKANPDRPAEGTVVEATLDKGRGAVATILVGRGTLKVGDIFVVGAESGKVRALIDDKGRNIKEAGPSLPVEILGLSGVPSAGDQLSVVENEARAREVAAYRAGVIHQKRTTAAPASLESMFSALREQKAQQYPVVVKADAQGSVEAIVGSLNKISTDLIQVRILHAGVGGITESDVSLAAASKAPIIGFNVRANAKAREIATRDGVALKYYDVIYDLLDEIRAAMAGQLGPEYLEHVVGRAEIREVFSAGKHGKAAGLLVLEGYIRQKLRARIMRDDVIIYNGSISSLRRFKDDVPEVRAGLECGITLEATTDIKPGDIVETFEVEERERTL.

2 disordered regions span residues 1–248 (MSDN…ARAR) and 254–273 (KRAR…QQKQ). Positions 22 to 38 (ETGQVKQSFSHGRSNTV) are enriched in polar residues. Residues 83 to 93 (APRPAPAPIPT) are compositionally biased toward pro residues. Residues 100-150 (LERREQQERLLREAEEARMAALEETRRREERAKAEATEEERRRAEENRRAE) show a composition bias toward basic and acidic residues. A compositionally biased stretch (low complexity) spans 156–196 (AAAAAAAAATAEAETAAAAPREEAPAAAGTAEEAPRTSSST). Residues 197 to 209 (MPPPRRFTPVPSP) show a composition bias toward pro residues. The segment covering 210–229 (KRPEPPRPQQRDRKGDDRRQ) has biased composition (basic and acidic residues). The 171-residue stretch at 356–526 (PRPPVVTIMG…ELQAELLELK (171 aa)) folds into the tr-type G domain. A G1 region spans residues 365–372 (GHVDHGKT). Position 365 to 372 (365 to 372 (GHVDHGKT)) interacts with GTP. Residues 390–394 (GITQH) form a G2 region. Residues 412 to 415 (DTPG) are G3. Residues 412–416 (DTPGH) and 466–469 (NKMD) each bind GTP. The segment at 466–469 (NKMD) is G4. Residues 502–504 (SAL) form a G5 region.

Belongs to the TRAFAC class translation factor GTPase superfamily. Classic translation factor GTPase family. IF-2 subfamily.

The protein localises to the cytoplasm. Functionally, one of the essential components for the initiation of protein synthesis. Protects formylmethionyl-tRNA from spontaneous hydrolysis and promotes its binding to the 30S ribosomal subunits. Also involved in the hydrolysis of GTP during the formation of the 70S ribosomal complex. The sequence is that of Translation initiation factor IF-2 from Rhizorhabdus wittichii (strain DSM 6014 / CCUG 31198 / JCM 15750 / NBRC 105917 / EY 4224 / RW1) (Sphingomonas wittichii).